The primary structure comprises 293 residues: NAD kinase (293 aa).

Asp72 acts as the Proton acceptor in catalysis. NAD(+)-binding positions include 72–73 (DG), 146–147 (ND), Arg157, Lys174, Asp176, 187–192 (TAYALS), and Gln247.

It belongs to the NAD kinase family. A divalent metal cation is required as a cofactor.

It localises to the cytoplasm. It catalyses the reaction NAD(+) + ATP = ADP + NADP(+) + H(+). Its function is as follows. Involved in the regulation of the intracellular balance of NAD and NADP, and is a key enzyme in the biosynthesis of NADP. Catalyzes specifically the phosphorylation on 2'-hydroxyl of the adenosine moiety of NAD to yield NADP. This chain is NAD kinase, found in Marinomonas sp. (strain MWYL1).